The chain runs to 85 residues: MYIIVVYDVSVERVNRVKKFLRQHLHWVQNSVFEGEVTLAEFERIKAGIGELIDGDEDSVVIYKLRSMPKREVMGVEKNPIEDII.

Mg(2+) is bound at residue Asp-8.

It belongs to the CRISPR-associated endoribonuclease Cas2 protein family. As to quaternary structure, homodimer, forms a heterotetramer with a Cas1 homodimer. It depends on Mg(2+) as a cofactor.

Its function is as follows. CRISPR (clustered regularly interspaced short palindromic repeat), is an adaptive immune system that provides protection against mobile genetic elements (viruses, transposable elements and conjugative plasmids). CRISPR clusters contain sequences complementary to antecedent mobile elements and target invading nucleic acids. CRISPR clusters are transcribed and processed into CRISPR RNA (crRNA). Functions as a ssRNA-specific endoribonuclease. Involved in the integration of spacer DNA into the CRISPR cassette. In Thermococcus kodakarensis (strain ATCC BAA-918 / JCM 12380 / KOD1) (Pyrococcus kodakaraensis (strain KOD1)), this protein is CRISPR-associated endoribonuclease Cas2.